The chain runs to 424 residues: Protein TUNICAMYCIN INDUCED 1 (424 aa).

Positions 1–25 (MGHRVLVYVGALFLILFTIFPSSSA) are cleaved as a signal peptide. Asn197, Asn296, and Asn406 each carry an N-linked (GlcNAc...) asparagine glycan.

Restricted to pollen grains at high levels.

It localises to the endoplasmic reticulum. Functionally, involved in the regulation of pollen surface morphology, probably by modulating the secretion of proteins and/or lipids during pollen development. This chain is Protein TUNICAMYCIN INDUCED 1, found in Arabidopsis thaliana (Mouse-ear cress).